The following is a 312-amino-acid chain: Putative mitochondrial transporter UCP3 (312 aa).

At 1-10 (MVGLKPSDVP) the chain is on the mitochondrial intermembrane side. A helical transmembrane segment spans residues 11-32 (PTMAVKFLGAGTAACFADLVTF). Solcar repeat units follow at residues 11 to 105 (PTMA…VKQV), 114 to 206 (SSLT…LKEK), and 215 to 300 (DNFP…LKRA). Over 33–76 (PLDTAKVRLQIQGENQAVQTARLVQYRGVLGTILTMVRTEGPCS) the chain is Mitochondrial matrix. A helical transmembrane segment spans residues 77 to 99 (PYNGLVAGLQRQMSFASIRIGLY). The Mitochondrial intermembrane portion of the chain corresponds to 100–119 (DSVKQVYTPKGADNSSLTTR). The chain crosses the membrane as a helical span at residues 120 to 136 (ILAGCTTGAMAVTCAQP). Over 137 to 183 (TDVVKVRFQASIHLGPSRSDRKYSGTMDAYRTIAREEGVRGLWKGTL) the chain is Mitochondrial matrix. Residues 184 to 200 (PNIMRNAIVNCAEVVTY) form a helical membrane-spanning segment. Residues 201-217 (DILKEKLLDYHLLTDNF) are Mitochondrial intermembrane-facing. A helical membrane pass occupies residues 218-237 (PCHFVSAFGAGFCATVVASP). Residues 238–271 (VDVVKTRYMNSPPGQYFSPLDCMIKMVAQEGPTA) are Mitochondrial matrix-facing. Residues 272 to 294 (FYKGFTPSFLRLGSWNVVMFVTY) traverse the membrane as a helical segment. A purine nucleotide binding region spans residues 279–301 (SFLRLGSWNVVMFVTYEQLKRAL). Over 295 to 312 (EQLKRALMKVQMLRESPF) the chain is Mitochondrial intermembrane.

It belongs to the mitochondrial carrier (TC 2.A.29) family. In terms of assembly, interacts with HAX1; the interaction is direct and calcium-dependent. Only in skeletal muscle and heart. Also expressed in white and brown adipose tissues. Is more expressed in glycolytic than in oxidative skeletal muscles.

It localises to the mitochondrion inner membrane. Its activity is regulated as follows. The proton transporter activity is activated by fatty acids (in vitro). The proton transporter activity is inhibited by ATP and ADP (in vitro). The effect of Ubiquinone/coenzyme Q10 on the proton transporter activity in reconstituted membranes is unclear (in vitro). Functionally, putative transmembrane transporter that plays a role in mitochondrial metabolism via an as yet unclear mechanism. Originally, this mitochondrial protein was thought to act as a proton transmembrane transporter from the mitochondrial intermembrane space into the matrix, causing proton leaks through the inner mitochondrial membrane, thereby uncoupling mitochondrial membrane potential generation from ATP synthesis. However, this function is controversial and uncoupling may not be the function, or at least not the main function, but rather a consequence of more conventional metabolite transporter activity. In Homo sapiens (Human), this protein is Putative mitochondrial transporter UCP3.